The primary structure comprises 102 residues: NADH-quinone oxidoreductase subunit K (102 aa).

Transmembrane regions (helical) follow at residues 5 to 25 (ITHYLTVSALMFTIGIAGIFL), 31 to 51 (IIILMSIELILLSVNLNFVAF), and 66 to 86 (FVLTVAAAEAAIGLAILVVFF).

Belongs to the complex I subunit 4L family. NDH-1 is composed of 14 different subunits. Subunits NuoA, H, J, K, L, M, N constitute the membrane sector of the complex.

The protein localises to the cell inner membrane. It catalyses the reaction a quinone + NADH + 5 H(+)(in) = a quinol + NAD(+) + 4 H(+)(out). Functionally, NDH-1 shuttles electrons from NADH, via FMN and iron-sulfur (Fe-S) centers, to quinones in the respiratory chain. The immediate electron acceptor for the enzyme in this species is believed to be ubiquinone. Couples the redox reaction to proton translocation (for every two electrons transferred, four hydrogen ions are translocated across the cytoplasmic membrane), and thus conserves the redox energy in a proton gradient. This chain is NADH-quinone oxidoreductase subunit K, found in Bartonella grahamii (strain as4aup).